The following is a 116-amino-acid chain: uncharacterized protein (116 aa).

The next 2 helical transmembrane spans lie at 55-77 and 87-109; these read LSYS…LYSF and FSYG…YAAL.

The protein localises to the membrane. This is an uncharacterized protein from Saccharomyces cerevisiae (strain ATCC 204508 / S288c) (Baker's yeast).